Here is a 280-residue protein sequence, read N- to C-terminus: SPX domain-containing protein 2 (280 aa).

One can recognise an SPX domain in the interval 1–162; that stretch reads MKFGKSLSSQ…GSMIRLPFVQ (162 aa). Disordered stretches follow at residues 191-244 and 257-280; these read PTNE…KSTV and GSST…EPGR.

In terms of assembly, interacts (via SPX domain) with PHR2 (via C-terminus). Interacts with RLI1 in the nucleus to prevents its positive regulation of leaf inclination during phosphate (Pi) starvation. Predominantly expressed in roots, leaves and seeds. Localized in leaves lamina joints.

It localises to the nucleus. Functionally, inhibits PHR2 DNA-binding activity via a phosphate (Pi)-dependent protein interaction. Together with SPX1, plays a negative role in the regulation of leaf inclination by preventing RLI1 transcription factor activity in Pi depleted conditions. The protein is SPX domain-containing protein 2 of Oryza sativa subsp. japonica (Rice).